Consider the following 422-residue polypeptide: Serine--tRNA ligase (422 aa).

229-231 (TAE) contributes to the L-serine binding site. An ATP-binding site is contributed by 260–262 (RAE). Position 283 (Glu-283) interacts with L-serine. 347–350 (EISS) lines the ATP pocket. Ser-383 is a binding site for L-serine.

The protein belongs to the class-II aminoacyl-tRNA synthetase family. Type-1 seryl-tRNA synthetase subfamily. In terms of assembly, homodimer. The tRNA molecule binds across the dimer.

It localises to the cytoplasm. It catalyses the reaction tRNA(Ser) + L-serine + ATP = L-seryl-tRNA(Ser) + AMP + diphosphate + H(+). It carries out the reaction tRNA(Sec) + L-serine + ATP = L-seryl-tRNA(Sec) + AMP + diphosphate + H(+). Its pathway is aminoacyl-tRNA biosynthesis; selenocysteinyl-tRNA(Sec) biosynthesis; L-seryl-tRNA(Sec) from L-serine and tRNA(Sec): step 1/1. Functionally, catalyzes the attachment of serine to tRNA(Ser). Is also able to aminoacylate tRNA(Sec) with serine, to form the misacylated tRNA L-seryl-tRNA(Sec), which will be further converted into selenocysteinyl-tRNA(Sec). This chain is Serine--tRNA ligase, found in Heliobacterium modesticaldum (strain ATCC 51547 / Ice1).